The primary structure comprises 202 residues: Small ribosomal subunit protein uS5 (202 aa).

Residues 1–13 (MPGQQRRGGGSGG) show a composition bias toward gly residues. The disordered stretch occupies residues 1–31 (MPGQQRRGGGSGGSDRRERRDRSGGGPAQEK). The span at 14–23 (SDRRERRDRS) shows a compositional bias: basic and acidic residues. The region spanning 34 to 97 (YVERVVAINR…EEAKKHFFKV (64 aa)) is the S5 DRBM domain.

This sequence belongs to the universal ribosomal protein uS5 family. Part of the 30S ribosomal subunit. Contacts proteins S4 and S8.

Its function is as follows. With S4 and S12 plays an important role in translational accuracy. Functionally, located at the back of the 30S subunit body where it stabilizes the conformation of the head with respect to the body. The polypeptide is Small ribosomal subunit protein uS5 (Parafrankia sp. (strain EAN1pec)).